Consider the following 367-residue polypeptide: Glutamate 5-kinase (367 aa).

Lysine 9 is an ATP binding site. Substrate is bound by residues serine 49, aspartate 136, and asparagine 148. ATP-binding positions include 168–169 (TD) and 210–216 (TGGMKSK). One can recognise a PUA domain in the interval 276–350 (SGQIEIDAGA…GMQSQHIQAR (75 aa)).

The protein belongs to the glutamate 5-kinase family.

It is found in the cytoplasm. It catalyses the reaction L-glutamate + ATP = L-glutamyl 5-phosphate + ADP. It participates in amino-acid biosynthesis; L-proline biosynthesis; L-glutamate 5-semialdehyde from L-glutamate: step 1/2. Functionally, catalyzes the transfer of a phosphate group to glutamate to form L-glutamate 5-phosphate. This chain is Glutamate 5-kinase, found in Bacillus cereus (strain ATCC 10987 / NRS 248).